The sequence spans 477 residues: Protein U33 (477 aa).

It belongs to the herpesviridae UL49 family.

This is Protein U33 (U33) from Homo sapiens (Human).